A 2620-amino-acid polypeptide reads, in one-letter code: Highly reducing polyketide synthase tazB (2620 aa).

The segment at 1 to 22 (MPFLNGNTTHHEAHSAEPDHGN) is disordered. The Ketosynthase family 3 (KS3) domain maps to 1–416 (MPFLNGNTTH…GTNAHCILDD (416 aa)). Over residues 9 to 22 (THHEAHSAEPDHGN) the composition is skewed to basic and acidic residues. Catalysis depends on for beta-ketoacyl synthase activity residues Cys166, His301, and His340. The segment at 460–481 (GFNKFDEPRGSDSAGSNANGSH) is disordered. Over residues 470 to 481 (SDSAGSNANGSH) the composition is skewed to low complexity. Residues 601–923 (VFTGQGAQYA…PYLATLSRKD (323 aa)) are malonyl-CoA:ACP transacylase (MAT) domain. Residues 993 to 1128 (HDLFGAPVPD…GEVSPDLKKS (136 aa)) form an N-terminal hotdog fold region. Residues 993–1313 (HDLFGAPVPD…LAGIRLSPFK (321 aa)) are dehydratase (DH) domain. Positions 993 to 1318 (HDLFGAPVPD…LSPFKPESSE (326 aa)) constitute a PKS/mFAS DH domain. The active-site Proton acceptor; for dehydratase activity is the His1025. Positions 1157-1318 (TAPVDFTPVY…LSPFKPESSE (162 aa)) are C-terminal hotdog fold. Residue Asp1225 is the Proton donor; for dehydratase activity of the active site. Positions 1379 to 1680 (GLRESREMKD…VDFEASSSIY (302 aa)) are methyltransferase (CMet) domain. The enoyl reductase (ER) domain stretch occupies residues 1910–2227 (GIDSLTWVTD…TGKSIGKVTL (318 aa)). Positions 2251–2425 (SFILAGGLGG…HGASVNLGAV (175 aa)) are ketoreductase (KR) domain. In terms of domain architecture, Carrier spans 2539–2620 (EAARIIHKAL…VSLSSFTKFR (82 aa)). Position 2576 is an O-(pantetheine 4'-phosphoryl)serine (Ser2576).

It participates in secondary metabolite biosynthesis. In terms of biological role, highly reducing polyketide synthase; part of the gene cluster that mediates the biosynthesis of azaterrilone A and other azaphilones, a class of fungal metabolites characterized by a highly oxygenated pyrano-quinone bicyclic core and exhibiting a broad range of bioactivities. The first step of the pathway begins with the non-reducing polyketide synthase tazA that assembles one acetyl-CoA starter unit, five malonyl-CoA units, and catalyzes a series of Claisen condensations, methylation, PT-mediated cyclization, and finally releases the first hexaketide precursor through the R-domain. The tazA product then undergoes reduction on its terminal ketone and the following pyran-ring formation by yet undetermined enzyme(s). Dehydration and enoyl reduction, possibly involving the trans-enoyl reductase tazE leads to the next intermediate. TazD is predicted as an acetyltransferase and might catalyze the acetylation steps leading to the synthesis of azaterrilone A. Azaterrilone A is not the final product of the taz pathway and both the highly reducing polyketide synthase tazB and the dual enzyme tazHJ catalyze late steps of the pathway, leading to the production of the 2 final stereoisomers that contain additional polyketide modification whose structures have still to be determined. This Aspergillus terreus (strain NIH 2624 / FGSC A1156) protein is Highly reducing polyketide synthase tazB.